The primary structure comprises 462 residues: Siroheme synthase (462 aa).

Residues 1–201 (MQFLPLFHKL…GKPEEGERLL (201 aa)) form a precorrin-2 dehydrogenase /sirohydrochlorin ferrochelatase region. NAD(+) is bound by residues 22 to 23 (EV) and 43 to 44 (PE). Ser-126 bears the Phosphoserine mark. The tract at residues 214–462 (GEVYLVGAGP…AWFEGAQGSL (249 aa)) is uroporphyrinogen-III C-methyltransferase. Pro-223 is a binding site for S-adenosyl-L-methionine. Catalysis depends on Asp-246, which acts as the Proton acceptor. Catalysis depends on Lys-268, which acts as the Proton donor. S-adenosyl-L-methionine-binding positions include 299–301 (GGD), Ile-304, 329–330 (TA), Met-381, and Gly-410.

In the N-terminal section; belongs to the precorrin-2 dehydrogenase / sirohydrochlorin ferrochelatase family. The protein in the C-terminal section; belongs to the precorrin methyltransferase family.

It catalyses the reaction uroporphyrinogen III + 2 S-adenosyl-L-methionine = precorrin-2 + 2 S-adenosyl-L-homocysteine + H(+). The enzyme catalyses precorrin-2 + NAD(+) = sirohydrochlorin + NADH + 2 H(+). It carries out the reaction siroheme + 2 H(+) = sirohydrochlorin + Fe(2+). Its pathway is cofactor biosynthesis; adenosylcobalamin biosynthesis; precorrin-2 from uroporphyrinogen III: step 1/1. The protein operates within cofactor biosynthesis; adenosylcobalamin biosynthesis; sirohydrochlorin from precorrin-2: step 1/1. It functions in the pathway porphyrin-containing compound metabolism; siroheme biosynthesis; precorrin-2 from uroporphyrinogen III: step 1/1. It participates in porphyrin-containing compound metabolism; siroheme biosynthesis; siroheme from sirohydrochlorin: step 1/1. Its pathway is porphyrin-containing compound metabolism; siroheme biosynthesis; sirohydrochlorin from precorrin-2: step 1/1. Functionally, multifunctional enzyme that catalyzes the SAM-dependent methylations of uroporphyrinogen III at position C-2 and C-7 to form precorrin-2 via precorrin-1. Then it catalyzes the NAD-dependent ring dehydrogenation of precorrin-2 to yield sirohydrochlorin. Finally, it catalyzes the ferrochelation of sirohydrochlorin to yield siroheme. In Ectopseudomonas mendocina (strain ymp) (Pseudomonas mendocina), this protein is Siroheme synthase.